Here is a 457-residue protein sequence, read N- to C-terminus: Zinc finger protein ZPR1 (457 aa).

Positions 1-13 (MSTVSDPNSSNPP) are enriched in polar residues. The tract at residues 1 to 21 (MSTVSDPNSSNPPESAGNIRP) is disordered. 2 consecutive C4-type zinc fingers follow at residues 43–75 (CMNC…CDHC) and 261–293 (CPSC…CGAC). The tract at residues 414-457 (VQSLSDDDSEPDDKLTVERYDRSYEDNEDLGLNDMKTEGYEEKA) is disordered. Composition is skewed to basic and acidic residues over residues 425–438 (DDKL…RSYE) and 448–457 (MKTEGYEEKA).

This sequence belongs to the ZPR1 family.

Might mediate EGFR and FGFR signal transduction cascades required for lumen formation in tracheal cells. The sequence is that of Zinc finger protein ZPR1 from Drosophila melanogaster (Fruit fly).